The chain runs to 255 residues: Imidazole glycerol phosphate synthase subunit HisF (255 aa).

Residues Asp11 and Asp130 contribute to the active site.

It belongs to the HisA/HisF family. As to quaternary structure, heterodimer of HisH and HisF.

It is found in the cytoplasm. It catalyses the reaction 5-[(5-phospho-1-deoxy-D-ribulos-1-ylimino)methylamino]-1-(5-phospho-beta-D-ribosyl)imidazole-4-carboxamide + L-glutamine = D-erythro-1-(imidazol-4-yl)glycerol 3-phosphate + 5-amino-1-(5-phospho-beta-D-ribosyl)imidazole-4-carboxamide + L-glutamate + H(+). It participates in amino-acid biosynthesis; L-histidine biosynthesis; L-histidine from 5-phospho-alpha-D-ribose 1-diphosphate: step 5/9. Functionally, IGPS catalyzes the conversion of PRFAR and glutamine to IGP, AICAR and glutamate. The HisF subunit catalyzes the cyclization activity that produces IGP and AICAR from PRFAR using the ammonia provided by the HisH subunit. This is Imidazole glycerol phosphate synthase subunit HisF from Exiguobacterium sp. (strain ATCC BAA-1283 / AT1b).